A 79-amino-acid chain; its full sequence is DNA gyrase inhibitor YacG (79 aa).

4 residues coordinate Zn(2+): C7, C10, C26, and C30.

Belongs to the DNA gyrase inhibitor YacG family. In terms of assembly, interacts with GyrB. Requires Zn(2+) as cofactor.

Its function is as follows. Inhibits all the catalytic activities of DNA gyrase by preventing its interaction with DNA. Acts by binding directly to the C-terminal domain of GyrB, which probably disrupts DNA binding by the gyrase. This Shewanella pealeana (strain ATCC 700345 / ANG-SQ1) protein is DNA gyrase inhibitor YacG.